A 615-amino-acid polypeptide reads, in one-letter code: 1-deoxy-D-xylulose-5-phosphate synthase (615 aa).

Residues histidine 76 and 117–119 contribute to the thiamine diphosphate site; that span reads GHS. Aspartate 148 lines the Mg(2+) pocket. Residues 149-150, asparagine 177, tyrosine 284, and glutamate 365 contribute to the thiamine diphosphate site; that span reads GA. Asparagine 177 contacts Mg(2+).

Belongs to the transketolase family. DXPS subfamily. As to quaternary structure, homodimer. Mg(2+) is required as a cofactor. The cofactor is thiamine diphosphate.

It carries out the reaction D-glyceraldehyde 3-phosphate + pyruvate + H(+) = 1-deoxy-D-xylulose 5-phosphate + CO2. The protein operates within metabolic intermediate biosynthesis; 1-deoxy-D-xylulose 5-phosphate biosynthesis; 1-deoxy-D-xylulose 5-phosphate from D-glyceraldehyde 3-phosphate and pyruvate: step 1/1. Its function is as follows. Catalyzes the acyloin condensation reaction between C atoms 2 and 3 of pyruvate and glyceraldehyde 3-phosphate to yield 1-deoxy-D-xylulose-5-phosphate (DXP). This chain is 1-deoxy-D-xylulose-5-phosphate synthase, found in Francisella tularensis subsp. novicida (strain U112).